A 164-amino-acid polypeptide reads, in one-letter code: ATP synthase subunit b (164 aa).

Residues 6-26 (GELVGNFILVTGSVIVLLLLI) traverse the membrane as a helical segment.

It belongs to the ATPase B chain family. In terms of assembly, F-type ATPases have 2 components, F(1) - the catalytic core - and F(0) - the membrane proton channel. F(1) has five subunits: alpha(3), beta(3), gamma(1), delta(1), epsilon(1). F(0) has three main subunits: a(1), b(2) and c(10-14). The alpha and beta chains form an alternating ring which encloses part of the gamma chain. F(1) is attached to F(0) by a central stalk formed by the gamma and epsilon chains, while a peripheral stalk is formed by the delta and b chains.

It localises to the cell membrane. Its function is as follows. F(1)F(0) ATP synthase produces ATP from ADP in the presence of a proton or sodium gradient. F-type ATPases consist of two structural domains, F(1) containing the extramembraneous catalytic core and F(0) containing the membrane proton channel, linked together by a central stalk and a peripheral stalk. During catalysis, ATP synthesis in the catalytic domain of F(1) is coupled via a rotary mechanism of the central stalk subunits to proton translocation. Functionally, component of the F(0) channel, it forms part of the peripheral stalk, linking F(1) to F(0). The sequence is that of ATP synthase subunit b from Streptococcus pyogenes serotype M1.